We begin with the raw amino-acid sequence, 137 residues long: ATP synthase epsilon chain (137 aa).

It belongs to the ATPase epsilon chain family. In terms of assembly, F-type ATPases have 2 components, CF(1) - the catalytic core - and CF(0) - the membrane proton channel. CF(1) has five subunits: alpha(3), beta(3), gamma(1), delta(1), epsilon(1). CF(0) has three main subunits: a, b and c.

Its subcellular location is the cellular thylakoid membrane. In terms of biological role, produces ATP from ADP in the presence of a proton gradient across the membrane. The protein is ATP synthase epsilon chain (atpC) of Synechococcus elongatus (strain ATCC 33912 / PCC 7942 / FACHB-805) (Anacystis nidulans R2).